The chain runs to 597 residues: Elongation factor 4 (597 aa).

The 183-residue stretch at 2 to 184 folds into the tr-type G domain; it reads DHIRNFSIIA…SLIAKVPPPK (183 aa). GTP-binding positions include 14 to 19 and 131 to 134; these read DHGKST and NKID.

It belongs to the TRAFAC class translation factor GTPase superfamily. Classic translation factor GTPase family. LepA subfamily.

The protein localises to the cell inner membrane. It catalyses the reaction GTP + H2O = GDP + phosphate + H(+). Its function is as follows. Required for accurate and efficient protein synthesis under certain stress conditions. May act as a fidelity factor of the translation reaction, by catalyzing a one-codon backward translocation of tRNAs on improperly translocated ribosomes. Back-translocation proceeds from a post-translocation (POST) complex to a pre-translocation (PRE) complex, thus giving elongation factor G a second chance to translocate the tRNAs correctly. Binds to ribosomes in a GTP-dependent manner. This chain is Elongation factor 4, found in Burkholderia lata (strain ATCC 17760 / DSM 23089 / LMG 22485 / NCIMB 9086 / R18194 / 383).